Reading from the N-terminus, the 353-residue chain is Photosystem II D2 protein (353 aa).

T2 carries the post-translational modification N-acetylthreonine. Phosphothreonine is present on T2. Residues 41-61 (CAYFALGGWFTGTTFVTSWYT) form a helical membrane-spanning segment. Position 118 (H118) interacts with chlorophyll a. The chain crosses the membrane as a helical span at residues 125–141 (GFMLRQFELARSVQLRP). Pheophytin a-binding residues include Q130 and N143. Residues 153–166 (VFVSVFLIYPLGQS) form a helical membrane-spanning segment. H198 contacts chlorophyll a. A helical transmembrane segment spans residues 208-228 (AALLCAIHGATVENTLFEDGD). Residues H215 and F262 each coordinate a plastoquinone. H215 contacts Fe cation. Fe cation is bound at residue H269. The helical transmembrane segment at 279–295 (GLWMSALGVVGLALNLR) threads the bilayer.

This sequence belongs to the reaction center PufL/M/PsbA/D family. In terms of assembly, PSII is composed of 1 copy each of membrane proteins PsbA, PsbB, PsbC, PsbD, PsbE, PsbF, PsbH, PsbI, PsbJ, PsbK, PsbL, PsbM, PsbT, PsbX, PsbY, PsbZ, Psb30/Ycf12, at least 3 peripheral proteins of the oxygen-evolving complex and a large number of cofactors. It forms dimeric complexes. The cofactor is The D1/D2 heterodimer binds P680, chlorophylls that are the primary electron donor of PSII, and subsequent electron acceptors. It shares a non-heme iron and each subunit binds pheophytin, quinone, additional chlorophylls, carotenoids and lipids. There is also a Cl(-1) ion associated with D1 and D2, which is required for oxygen evolution. The PSII complex binds additional chlorophylls, carotenoids and specific lipids..

Its subcellular location is the plastid. The protein resides in the chloroplast thylakoid membrane. It catalyses the reaction 2 a plastoquinone + 4 hnu + 2 H2O = 2 a plastoquinol + O2. In terms of biological role, photosystem II (PSII) is a light-driven water:plastoquinone oxidoreductase that uses light energy to abstract electrons from H(2)O, generating O(2) and a proton gradient subsequently used for ATP formation. It consists of a core antenna complex that captures photons, and an electron transfer chain that converts photonic excitation into a charge separation. The D1/D2 (PsbA/PsbD) reaction center heterodimer binds P680, the primary electron donor of PSII as well as several subsequent electron acceptors. D2 is needed for assembly of a stable PSII complex. In Barbarea verna (Land cress), this protein is Photosystem II D2 protein.